A 24-amino-acid chain; its full sequence is Probable caffeoyl-CoA O-methyltransferase (24 aa).

This sequence belongs to the class I-like SAM-binding methyltransferase superfamily. Cation-dependent O-methyltransferase family. CCoAMT subfamily. It depends on a divalent metal cation as a cofactor.

It carries out the reaction (E)-caffeoyl-CoA + S-adenosyl-L-methionine = (E)-feruloyl-CoA + S-adenosyl-L-homocysteine + H(+). It functions in the pathway aromatic compound metabolism; phenylpropanoid biosynthesis. Methylates caffeoyl-CoA to feruloyl-CoA and 5-hydroxyferuloyl-CoA to sinapoyl-CoA. Plays a role in the synthesis of feruloylated polysaccharides. Involved in the reinforcement of the plant cell wall. Also involved in the responding to wounding or pathogen challenge by the increased formation of cell wall-bound ferulic acid polymers. This is Probable caffeoyl-CoA O-methyltransferase from Pinus pinaster (Maritime pine).